The chain runs to 338 residues: GTPase Obg (338 aa).

One can recognise an Obg domain in the interval 1 to 159 (MKFLDKAIIH…RILRLELILI (159 aa)). In terms of domain architecture, OBG-type G spans 160–333 (AHVGTLGLPN…IVKKIYDFLK (174 aa)). GTP contacts are provided by residues 166–173 (GLPNSGKS), 191–195 (FTTLK), 213–216 (DIPG), 283–286 (NKID), and 314–316 (SAI). Mg(2+) is bound by residues S173 and T193.

Belongs to the TRAFAC class OBG-HflX-like GTPase superfamily. OBG GTPase family. As to quaternary structure, monomer. Mg(2+) is required as a cofactor.

Its subcellular location is the cytoplasm. Its function is as follows. An essential GTPase which binds GTP, GDP and possibly (p)ppGpp with moderate affinity, with high nucleotide exchange rates and a fairly low GTP hydrolysis rate. Plays a role in control of the cell cycle, stress response, ribosome biogenesis and in those bacteria that undergo differentiation, in morphogenesis control. This is GTPase Obg from Buchnera aphidicola subsp. Baizongia pistaciae (strain Bp).